A 57-amino-acid polypeptide reads, in one-letter code: Cecropin-A (57 aa).

A signal peptide spans 1-21 (IFFFVFACLLALSAVSAAPEP).

This sequence belongs to the cecropin family.

Its subcellular location is the secreted. Functionally, cecropins have lytic and antibacterial activity against several Gram-positive and Gram-negative bacteria. The sequence is that of Cecropin-A (CECA) from Spodoptera litura (Asian cotton leafworm).